We begin with the raw amino-acid sequence, 201 residues long: Glutathione peroxidase 1 (201 aa).

S32 is subject to Phosphoserine. U47 is an active-site residue. U47 is a non-standard amino acid (selenocysteine). N6-acetyllysine; alternate occurs at positions 86 and 112. K86 and K112 each carry N6-succinyllysine; alternate. K119 is modified (N6-acetyllysine). Position 146 is an N6-acetyllysine; alternate (K146). Residue K146 is modified to N6-succinyllysine; alternate. S195 and S199 each carry phosphoserine.

Belongs to the glutathione peroxidase family. As to quaternary structure, homotetramer. Interacts with MIEN1. In terms of processing, during periods of oxidative stress, Sec-47 may react with a superoxide radical, irreversibly lose hydroselenide and be converted to dehydroalanine. As to expression, expressed in liver and lung.

It is found in the cytoplasm. Its subcellular location is the mitochondrion. It carries out the reaction 2 glutathione + H2O2 = glutathione disulfide + 2 H2O. The enzyme catalyses a hydroperoxy polyunsaturated fatty acid + 2 glutathione = a hydroxy polyunsaturated fatty acid + glutathione disulfide + H2O. It catalyses the reaction tert-butyl hydroperoxide + 2 glutathione = tert-butanol + glutathione disulfide + H2O. The catalysed reaction is cumene hydroperoxide + 2 glutathione = 2-phenylpropan-2-ol + glutathione disulfide + H2O. It carries out the reaction (13S)-hydroperoxy-(9Z,11E)-octadecadienoate + 2 glutathione = (13S)-hydroxy-(9Z,11E)-octadecadienoate + glutathione disulfide + H2O. The enzyme catalyses (9S)-hydroperoxy-(10E,12Z)-octadecadienoate + 2 glutathione = (9S)-hydroxy-(10E,12Z)-octadecadienoate + glutathione disulfide + H2O. It catalyses the reaction (5S)-hydroperoxy-(6E,8Z,11Z,14Z)-eicosatetraenoate + 2 glutathione = (5S)-hydroxy-(6E,8Z,11Z,14Z)-eicosatetraenoate + glutathione disulfide + H2O. The catalysed reaction is (12S)-hydroperoxy-(5Z,8Z,10E,14Z)-eicosatetraenoate + 2 glutathione = (12S)-hydroxy-(5Z,8Z,10E,14Z)-eicosatetraenoate + glutathione disulfide + H2O. It carries out the reaction (12R)-hydroperoxy-(5Z,8Z,10E,14Z)-eicosatetraenoate + 2 glutathione = (12R)-hydroxy-(5Z,8Z,10E,14Z)-eicosatetraenoate + glutathione disulfide + H2O. The enzyme catalyses (15S)-hydroperoxy-(5Z,8Z,11Z,13E)-eicosatetraenoate + 2 glutathione = (15S)-hydroxy-(5Z,8Z,11Z,13E)-eicosatetraenoate + glutathione disulfide + H2O. It catalyses the reaction (5S)-hydroperoxy-(6E,8Z,11Z,14Z,17Z)-eicosapentaenoate + 2 glutathione = (5S)-hydroxy-(6E,8Z,11Z,14Z,17Z)-eicosapentaenoate + glutathione disulfide + H2O. The catalysed reaction is (12S)-hydroperoxy-(5Z,8Z,10E,14Z,17Z)-eicosapentaenoate + 2 glutathione = (12S)-hydroxy-(5Z,8Z,10E,14Z,17Z)-eicosapentaenoate + glutathione disulfide + H2O. It carries out the reaction (15S)-hydroperoxy-(5Z,8Z,11Z,13E,17Z)-eicosapentaenoate + 2 glutathione = (15S)-hydroxy-(5Z,8Z,11Z,13E,17Z)-eicosapentaenoate + glutathione disulfide + H2O. The enzyme catalyses (15S)-hydroperoxy-(11Z,13E)-eicosadienoate + 2 glutathione = (15S)-hydroxy-(11Z,13E)-eicosadienoate + glutathione disulfide + H2O. It catalyses the reaction (17S)-hydroperoxy-(4Z,7Z,10Z,13Z,15E,19Z)-docosahexaenoate + 2 glutathione = (17S)-hydroxy-(4Z,7Z,10Z,13Z,15E,19Z)-docosahexaenoate + glutathione disulfide + H2O. Its function is as follows. Catalyzes the reduction of hydroperoxides in a glutathione-dependent manner thus regulating cellular redox homeostasis. Can reduce small soluble hydroperoxides such as H2O2, cumene hydroperoxide and tert-butyl hydroperoxide, as well as several fatty acid-derived hydroperoxides. In platelets catalyzes the reduction of 12-hydroperoxyeicosatetraenoic acid, the primary product of the arachidonate 12-lipoxygenase pathway. This is Glutathione peroxidase 1 from Rattus norvegicus (Rat).